The sequence spans 117 residues: Ribonuclease P protein component (117 aa).

Belongs to the RnpA family. Consists of a catalytic RNA component (M1 or rnpB) and a protein subunit.

It catalyses the reaction Endonucleolytic cleavage of RNA, removing 5'-extranucleotides from tRNA precursor.. RNaseP catalyzes the removal of the 5'-leader sequence from pre-tRNA to produce the mature 5'-terminus. It can also cleave other RNA substrates such as 4.5S RNA. The protein component plays an auxiliary but essential role in vivo by binding to the 5'-leader sequence and broadening the substrate specificity of the ribozyme. The polypeptide is Ribonuclease P protein component (Thermotoga maritima (strain ATCC 43589 / DSM 3109 / JCM 10099 / NBRC 100826 / MSB8)).